A 320-amino-acid chain; its full sequence is ATP-dependent 6-phosphofructokinase (320 aa).

ATP-binding positions include Gly12, 73–74, and 103–106; these read RF and GDGS. Asp104 is a Mg(2+) binding site. 126–128 is a binding site for substrate; the sequence is TID. Catalysis depends on Asp128, which acts as the Proton acceptor. Arg155 is a binding site for ADP. Residues Arg163 and 170 to 172 each bind substrate; that span reads MGR. ADP is bound by residues 186 to 188 and Lys212; that span reads GCE. Residues Glu223, Arg244, and 250–253 each bind substrate; that span reads HIQR.

It belongs to the phosphofructokinase type A (PFKA) family. ATP-dependent PFK group I subfamily. Prokaryotic clade 'B1' sub-subfamily. In terms of assembly, homotetramer. It depends on Mg(2+) as a cofactor.

Its subcellular location is the cytoplasm. It carries out the reaction beta-D-fructose 6-phosphate + ATP = beta-D-fructose 1,6-bisphosphate + ADP + H(+). The protein operates within carbohydrate degradation; glycolysis; D-glyceraldehyde 3-phosphate and glycerone phosphate from D-glucose: step 3/4. With respect to regulation, allosterically activated by ADP and other diphosphonucleosides, and allosterically inhibited by phosphoenolpyruvate. Catalyzes the phosphorylation of D-fructose 6-phosphate to fructose 1,6-bisphosphate by ATP, the first committing step of glycolysis. In Buchnera aphidicola subsp. Cinara cedri (strain Cc), this protein is ATP-dependent 6-phosphofructokinase.